The primary structure comprises 113 residues: Hydrogenase maturation factor HypA (113 aa).

Residue His-2 participates in Ni(2+) binding. Residues Cys-73, Cys-76, Cys-89, and Cys-92 each coordinate Zn(2+).

It belongs to the HypA/HybF family.

In terms of biological role, involved in the maturation of [NiFe] hydrogenases. Required for nickel insertion into the metal center of the hydrogenase. The polypeptide is Hydrogenase maturation factor HypA (Bradyrhizobium sp. (strain ORS 278)).